Consider the following 564-residue polypeptide: Arrestin domain-containing protein E (564 aa).

Over residues 74-146 the composition is skewed to low complexity; that stretch reads SQQPQSSQPS…NTSNGFSPPN (73 aa). Disordered regions lie at residues 74 to 150 and 245 to 286; these read SQQP…LNKN and ASQP…SFPS. Pro residues predominate over residues 250 to 259; that stretch reads PQQPQQPQPQ. Positions 260 to 269 are enriched in low complexity; it reads QPQQQQFQQQ. A compositionally biased stretch (polar residues) spans 270-285; sequence SYNNNNSTQSMLSSFP. Residues 348-413 enclose the LIM zinc-binding domain; sequence DKCAACDALL…PMCFESTTGL (66 aa).

This Dictyostelium discoideum (Social amoeba) protein is Arrestin domain-containing protein E (adcE).